A 485-amino-acid polypeptide reads, in one-letter code: Ribulose bisphosphate carboxylase large chain (485 aa).

2 residues coordinate substrate: Asn-124 and Thr-174. Lys-176 serves as the catalytic Proton acceptor. Lys-178 is a binding site for substrate. Positions 202, 204, and 205 each coordinate Mg(2+). Residue Lys-202 is modified to N6-carboxylysine. The active-site Proton acceptor is the His-294. Substrate-binding residues include Arg-295, His-327, and Ser-379.

The protein belongs to the RuBisCO large chain family. Type I subfamily. Heterohexadecamer of 8 large chains and 8 small chains. Requires Mg(2+) as cofactor.

It carries out the reaction 2 (2R)-3-phosphoglycerate + 2 H(+) = D-ribulose 1,5-bisphosphate + CO2 + H2O. The enzyme catalyses D-ribulose 1,5-bisphosphate + O2 = 2-phosphoglycolate + (2R)-3-phosphoglycerate + 2 H(+). Its function is as follows. RuBisCO catalyzes two reactions: the carboxylation of D-ribulose 1,5-bisphosphate, the primary event in carbon dioxide fixation, as well as the oxidative fragmentation of the pentose substrate. Both reactions occur simultaneously and in competition at the same active site. The sequence is that of Ribulose bisphosphate carboxylase large chain from Rhodopseudomonas palustris (strain TIE-1).